The primary structure comprises 248 residues: Isoprenyl transferase (248 aa).

Residue Asp-28 is part of the active site. Asp-28 contacts Mg(2+). Substrate-binding positions include Gly-29–Arg-32, Trp-33, Arg-41, His-45, and Ser-73–Glu-75. The active-site Proton acceptor is Asn-76. Substrate-binding positions include Trp-77, Arg-79, Arg-196, and Arg-202–Ser-204. Mg(2+) is bound at residue Glu-215.

The protein belongs to the UPP synthase family. In terms of assembly, homodimer. Requires Mg(2+) as cofactor.

Functionally, catalyzes the condensation of isopentenyl diphosphate (IPP) with allylic pyrophosphates generating different type of terpenoids. This chain is Isoprenyl transferase, found in Zymomonas mobilis subsp. mobilis (strain ATCC 31821 / ZM4 / CP4).